Consider the following 405-residue polypeptide: MDTLVEDDICILNHEKAHRREAVTPLSAYPGDESVASHFALVTAYEDIKKRLKDSEKENSFLKKRIRALEERLVGARADEETSSVGREQVNKAYHAYREVCIDRDNLKNQLEKINKDNSESLKMLNEQLQSKEVELLQLRTEVETQQVMRNLNPPSSSWEVEKLSCDLKIHGLEQELGLLRKECSDLRTELQKARQTGPPQEDILQGRDVIRPSLSREEHVPHQGLHHSDNMQHAYWELKREMSNLHLVTQVQAELLRKLKTSAAVKKACTPVGCVEDLGRDSTKLHLTNFTATYKRHPSLSPNGKAPCYAPSSPLPGDRKVFSDKAVLQSWTDNERLVPNDGADFPEHSSYGRNSLEDNSWVFPSPPKSSETAFGENKSKILPLSNLPPLHYLDQQNQNCLYKS.

Positions 1–198 are homodimerization; the sequence is MDTLVEDDIC…TELQKARQTG (198 aa). A coiled-coil region spans residues 40–197; sequence ALVTAYEDIK…RTELQKARQT (158 aa). The segment at 229–270 is interaction with TBK1 and IKBKE; the sequence is SDNMQHAYWELKREMSNLHLVTQVQAELLRKLKTSAAVKKAC. A phosphoserine mark is found at serine 331 and serine 366. The interval 357-377 is disordered; it reads LEDNSWVFPSPPKSSETAFGE.

Homodimer. Interacts with IKBKE and TBK1. Interacts with TICAM1. Interacts with TAX1BP1. Interacts with CALCOCO2. In terms of processing, ubiquitinated via 'Lys-48'-linked polyubiquitination by TRIM38, leading to its degradation. In terms of tissue distribution, testis, ovary, heart, lung, kidney and brain. Expressed mainly in the spermatocytes or spermatids in the testis.

The protein localises to the cytoplasm. Adapter protein which binds TBK1 and IKBKE playing a role in antiviral innate immunity. Activates serine/threonine-protein kinase TBK1 and facilitates its oligomerization. Enhances the phosphorylation of NF-kappa-B p65 subunit RELA by TBK1. Promotes TBK1-induced as well as TNF-alpha or PMA-induced activation of NF-kappa-B. Participates in IFNB promoter activation via TICAM1. The protein is 5-azacytidine-induced protein 2 (Azi2) of Mus musculus (Mouse).